The primary structure comprises 351 residues: Putative [LysW]-L-2-aminoadipate/[LysW]-L-glutamate phosphate reductase (351 aa).

NADP(+) contacts are provided by residues 10 to 13 (SGFT) and 34 to 36 (SRK). Residue Cys151 is part of the active site. Asn318 is an NADP(+) binding site.

The protein belongs to the NAGSA dehydrogenase family. Type 1 subfamily. LysY sub-subfamily.

It localises to the cytoplasm. It carries out the reaction [amino-group carrier protein]-C-terminal-N-(1-carboxy-5-oxopentan-1-yl)-L-glutamine + phosphate + NADP(+) = [amino-group carrier protein]-C-terminal-N-(1-carboxy-5-phosphooxy-5-oxopentan-1-yl)-L-glutamine + NADPH + H(+). The catalysed reaction is [amino-group carrier protein]-C-terminal-gamma-(L-glutamyl-5-semialdehyde)-L-glutamate + phosphate + NADP(+) = [amino-group carrier protein]-C-terminal-gamma-(5-phospho-L-glutamyl)-L-glutamate + NADPH + H(+). It functions in the pathway amino-acid biosynthesis; L-lysine biosynthesis via AAA pathway; L-lysine from L-alpha-aminoadipate (Thermus route): step 3/5. The protein operates within amino-acid biosynthesis; L-arginine biosynthesis. Its function is as follows. Involved in both the arginine and lysine biosynthetic pathways. The chain is Putative [LysW]-L-2-aminoadipate/[LysW]-L-glutamate phosphate reductase from Pyrobaculum calidifontis (strain DSM 21063 / JCM 11548 / VA1).